An 870-amino-acid chain; its full sequence is Phenylalanine--tRNA ligase beta subunit (870 aa).

The tRNA-binding domain occupies 39–148; that stretch reads AADLQKFEVA…EDAVVGEPFT (110 aa). Residues 427-551 form the B5 domain; that stretch reads PAKKTLDFPA…RIYGYDKIES (125 aa). Residues 450–498 enclose the RPE1 insert domain; that stretch reads LLHNEANKGEFVGNTEHSIAAYKEVREDASTGLTPKLPLEASYVKGLNI. Residues Asp529, Asp535, Glu538, and Glu539 each coordinate Mg(2+). The FDX-ACB domain occupies 776–869; that stretch reads SDYQANFRDY…IEQKFQGTLR (94 aa).

The protein belongs to the phenylalanyl-tRNA synthetase beta subunit family. Type 1 subfamily. As to quaternary structure, tetramer of two alpha and two beta subunits. Mg(2+) serves as cofactor.

Its subcellular location is the cytoplasm. The enzyme catalyses tRNA(Phe) + L-phenylalanine + ATP = L-phenylalanyl-tRNA(Phe) + AMP + diphosphate + H(+). In Rickettsia bellii (strain RML369-C), this protein is Phenylalanine--tRNA ligase beta subunit (pheT).